Here is a 94-residue protein sequence, read N- to C-terminus: Co-chaperonin GroES (94 aa).

Belongs to the GroES chaperonin family. As to quaternary structure, heptamer of 7 subunits arranged in a ring. Interacts with the chaperonin GroEL.

It localises to the cytoplasm. In terms of biological role, together with the chaperonin GroEL, plays an essential role in assisting protein folding. The GroEL-GroES system forms a nano-cage that allows encapsulation of the non-native substrate proteins and provides a physical environment optimized to promote and accelerate protein folding. GroES binds to the apical surface of the GroEL ring, thereby capping the opening of the GroEL channel. In Ehrlichia canis (strain Jake), this protein is Co-chaperonin GroES.